Reading from the N-terminus, the 274-residue chain is Single-stranded DNA-binding protein WHY1, chloroplastic (274 aa).

The N-terminal 54 residues, M1 to K54, are a transit peptide targeting the chloroplast. The interval K100 to L105 is required for ssDNA binding. A Nuclear localization signal motif is present at residues K178 to K191. The interval P253–R274 is disordered.

This sequence belongs to the Whirly family. In terms of assembly, homotetramer.

Its subcellular location is the nucleus. It localises to the plastid. The protein localises to the chloroplast. In terms of biological role, single-stranded DNA-binding protein that acts as a transcriptional activator of the pathogenesis-related gene PR-10a. Upon elicitation, binds a 30bp promoter sequence known as elicitor element response (ERE) and is required for PR-10a expression. In Solanum tuberosum (Potato), this protein is Single-stranded DNA-binding protein WHY1, chloroplastic (WHY1).